Here is a 456-residue protein sequence, read N- to C-terminus: Histidinol dehydrogenase homolog (456 aa).

H279 provides a ligand contact to Zn(2+). Residues E347 and H348 each act as proton acceptor in the active site. Zn(2+) is bound at residue H440.

Belongs to the histidinol dehydrogenase family. Zn(2+) serves as cofactor.

This Rhizobium meliloti (strain 1021) (Ensifer meliloti) protein is Histidinol dehydrogenase homolog.